The following is a 149-amino-acid chain: 3-dehydroquinate dehydratase (149 aa).

Tyrosine 26 functions as the Proton acceptor in the catalytic mechanism. Asparagine 77, histidine 83, and aspartate 90 together coordinate substrate. Histidine 103 (proton donor) is an active-site residue. Residues 104-105 (LS) and arginine 114 each bind substrate.

Belongs to the type-II 3-dehydroquinase family. Homododecamer.

It carries out the reaction 3-dehydroquinate = 3-dehydroshikimate + H2O. The protein operates within metabolic intermediate biosynthesis; chorismate biosynthesis; chorismate from D-erythrose 4-phosphate and phosphoenolpyruvate: step 3/7. Catalyzes a trans-dehydration via an enolate intermediate. This Aliivibrio fischeri (strain MJ11) (Vibrio fischeri) protein is 3-dehydroquinate dehydratase.